We begin with the raw amino-acid sequence, 208 residues long: Octanoyltransferase (208 aa).

The region spanning 29–208 (KTQDELVWLL…KEFNKVFCNC (180 aa)) is the BPL/LPL catalytic domain. Substrate contacts are provided by residues 68–75 (RGGKYTYH), 140–142 (AFG), and 153–155 (GVS). The active-site Acyl-thioester intermediate is Cys171.

The protein belongs to the LipB family.

Its subcellular location is the cytoplasm. It carries out the reaction octanoyl-[ACP] + L-lysyl-[protein] = N(6)-octanoyl-L-lysyl-[protein] + holo-[ACP] + H(+). Its pathway is protein modification; protein lipoylation via endogenous pathway; protein N(6)-(lipoyl)lysine from octanoyl-[acyl-carrier-protein]: step 1/2. Catalyzes the transfer of endogenously produced octanoic acid from octanoyl-acyl-carrier-protein onto the lipoyl domains of lipoate-dependent enzymes. Lipoyl-ACP can also act as a substrate although octanoyl-ACP is likely to be the physiological substrate. In Ehrlichia ruminantium (strain Gardel), this protein is Octanoyltransferase.